We begin with the raw amino-acid sequence, 861 residues long: ToMV resistant protein Tm-2 netted virescent (861 aa).

Residues 63 to 83 (VKNLLKDIQELAGDVEDLLDD) adopt a coiled-coil conformation. Positions 162-388 (DDFNMLQAKL…LESMGHKVQD (227 aa)) constitute an NB-ARC domain. 185-192 (GMPGLGKT) contacts ATP. 13 LRR repeats span residues 225–248 (LDIA…NLRS), 305–327 (LHAL…IFNF), 388–411 (DGCA…CFLY), 449–472 (LAED…TYNG), 510–536 (VARL…KLEK), 585–608 (MTCL…IVKL), 609–631 (TRLE…VWES), 652–680 (ISSF…FFEP), 689–710 (LRKL…IFSP), 712–735 (LKAL…LSSY), 736–758 (PHIA…SFPP), 784–807 (LRKL…EANG), and 810–835 (FPQL…DVSM).

It belongs to the disease resistance NB-LRR family. As to quaternary structure, (Microbial infection) Interacts with tobamoviruses mouvement protein at the plasma membrane; this interaction triggers defense responses leading to programmed cell death. In terms of assembly, binds to HSP90 proteins; this interaction seems required for defense responses toward tobamoviruses.

It is found in the cell membrane. Inhibitor of viral mouvements which confers resistance to some tobamoviruses including tomato mosaic virus (ToMV) (e.g. isolate L and W3) and tobacco mosaic virus (TMV), but not to resistance-breaking isolates (e.g. Ltbl) ToMV and tomato brown rugose fruit virus (ToBRFV). Elicits a hypersensitive reaction in response to avirulent (Avr) movement proteins from resistance inducing tobamoviruses (e.g. ToMV and TMV) strains, thus leading to programmed cell death. In Solanum lycopersicum (Tomato), this protein is ToMV resistant protein Tm-2 netted virescent.